Reading from the N-terminus, the 177-residue chain is Large ribosomal subunit protein uL10 (177 aa).

The protein belongs to the universal ribosomal protein uL10 family. As to quaternary structure, part of the ribosomal stalk of the 50S ribosomal subunit. The N-terminus interacts with L11 and the large rRNA to form the base of the stalk. The C-terminus forms an elongated spine to which L12 dimers bind in a sequential fashion forming a multimeric L10(L12)X complex.

Forms part of the ribosomal stalk, playing a central role in the interaction of the ribosome with GTP-bound translation factors. The sequence is that of Large ribosomal subunit protein uL10 from Xanthomonas axonopodis pv. citri (strain 306).